The sequence spans 401 residues: Chorismate synthase (401 aa).

Residues Arg40 and Arg46 each contribute to the NADP(+) site. FMN contacts are provided by residues Arg135–Ser137, Gln256–Ala257, Gly302, Lys317–Ser321, and Arg343.

This sequence belongs to the chorismate synthase family. Homotetramer. FMNH2 is required as a cofactor.

It carries out the reaction 5-O-(1-carboxyvinyl)-3-phosphoshikimate = chorismate + phosphate. It functions in the pathway metabolic intermediate biosynthesis; chorismate biosynthesis; chorismate from D-erythrose 4-phosphate and phosphoenolpyruvate: step 7/7. Catalyzes the anti-1,4-elimination of the C-3 phosphate and the C-6 proR hydrogen from 5-enolpyruvylshikimate-3-phosphate (EPSP) to yield chorismate, which is the branch point compound that serves as the starting substrate for the three terminal pathways of aromatic amino acid biosynthesis. This reaction introduces a second double bond into the aromatic ring system. The protein is Chorismate synthase of Saccharopolyspora erythraea (strain ATCC 11635 / DSM 40517 / JCM 4748 / NBRC 13426 / NCIMB 8594 / NRRL 2338).